Reading from the N-terminus, the 80-residue chain is Tripartite terminase subunit 2 (80 aa).

Belongs to the herpesviridae TRM2 protein family. As to quaternary structure, associates with TRM1 and TRM3 to form the tripartite terminase complex.

Its subcellular location is the host nucleus. Its function is as follows. Component of the molecular motor that translocates viral genomic DNA in empty capsid during DNA packaging. Forms a tripartite terminase complex together with TRM1 and TRM3 in the host cytoplasm. Once the complex reaches the host nucleus, it interacts with the capsid portal vertex. This portal forms a ring in which genomic DNA is translocated into the capsid. The chain is Tripartite terminase subunit 2 from Homo sapiens (Human).